The sequence spans 294 residues: MLPNEELVPVKRITPQSSWSWISIDATGKKTVLDVDKYVIMHRVQIHARDLRILDPNLFYPSAILGRERAIVLNLEHIKAIITAKEVLIQDSSDENLIPTLEEFQTRLSVGNKAHGGQLDGDVVEEDESAFEFRALEVALEAICSFLAARTIELEKSAYPALDELTLKLTSRNLLRVCKLKSSMTRLTAQVQKIKDELEQLLEDDEDMAELYLSRKLAGASSPAIDSGEHINWYPTSPTIGAKISRAKSHLVRSATVRGDDKNDVEEVEMLLEAHFYANRQNFEQINRATRVCG.

Positions 179–216 (KLKSSMTRLTAQVQKIKDELEQLLEDDEDMAELYLSRK) form a coiled coil.

The protein belongs to the CorA metal ion transporter (MIT) (TC 1.A.35.5) family.

The sequence is that of Putative inactive magnesium transporter MRS2-8 (MRS2-8) from Arabidopsis thaliana (Mouse-ear cress).